Consider the following 307-residue polypeptide: Nucleotide-binding protein Acid345_3782 (307 aa).

Residue 31–38 coordinates ATP; the sequence is GLSGSGKA. 81-84 is a GTP binding site; it reads DIRE.

Belongs to the RapZ-like family.

Its function is as follows. Displays ATPase and GTPase activities. This is Nucleotide-binding protein Acid345_3782 from Koribacter versatilis (strain Ellin345).